Consider the following 269-residue polypeptide: MKQPIIVVENLYSSYDGKNYVLRNVSFTVNEGELFGILGPNGAGKSTLVLHLNGILKAKRGRVLVSGIDVRKNPREVRKLVGIVFQDPNDQLFCPTVREEVGFGPYNLGVRGKDLEDVVFNSLKLVGMEGYIDREIKSLSFGEKKRVAIAAILAMNPQIVIFDEPFANLDFKGKKLVWDVIKTLRKEGKTVIIVTHEAEYLLECDRILLLANGEVIRVGEPGEVLIPEILKRNNLDVPLIIELFFELGLELPKSLDDAKRVLKSKLKLG.

In terms of domain architecture, ABC transporter spans 6–237; that stretch reads IVVENLYSSY…EILKRNNLDV (232 aa). 39–46 serves as a coordination point for ATP; sequence GPNGAGKS.

This sequence belongs to the ABC transporter superfamily.

It is found in the cell membrane. Its function is as follows. Probably part of an ABC transporter complex. Responsible for energy coupling to the transport system. This chain is Putative ABC transporter ATP-binding protein PF0528, found in Pyrococcus furiosus (strain ATCC 43587 / DSM 3638 / JCM 8422 / Vc1).